We begin with the raw amino-acid sequence, 1070 residues long: DNA-directed RNA polymerase subunit beta (1070 aa).

Belongs to the RNA polymerase beta chain family. As to quaternary structure, in plastids the minimal PEP RNA polymerase catalytic core is composed of four subunits: alpha, beta, beta', and beta''. When a (nuclear-encoded) sigma factor is associated with the core the holoenzyme is formed, which can initiate transcription.

It localises to the plastid. Its subcellular location is the chloroplast. The catalysed reaction is RNA(n) + a ribonucleoside 5'-triphosphate = RNA(n+1) + diphosphate. In terms of biological role, DNA-dependent RNA polymerase catalyzes the transcription of DNA into RNA using the four ribonucleoside triphosphates as substrates. In Cucumis sativus (Cucumber), this protein is DNA-directed RNA polymerase subunit beta.